Here is a 260-residue protein sequence, read N- to C-terminus: Ribosomal RNA small subunit methyltransferase J (260 aa).

S-adenosyl-L-methionine-binding positions include 101–102 (RD), 117–118 (ER), 153–154 (SS), and Asp176.

Belongs to the methyltransferase superfamily. RsmJ family.

Its subcellular location is the cytoplasm. It carries out the reaction guanosine(1516) in 16S rRNA + S-adenosyl-L-methionine = N(2)-methylguanosine(1516) in 16S rRNA + S-adenosyl-L-homocysteine + H(+). Functionally, specifically methylates the guanosine in position 1516 of 16S rRNA. In Aliivibrio salmonicida (strain LFI1238) (Vibrio salmonicida (strain LFI1238)), this protein is Ribosomal RNA small subunit methyltransferase J.